The primary structure comprises 171 residues: Adenine phosphoribosyltransferase (171 aa).

It belongs to the purine/pyrimidine phosphoribosyltransferase family. Homodimer.

It is found in the cytoplasm. It carries out the reaction AMP + diphosphate = 5-phospho-alpha-D-ribose 1-diphosphate + adenine. It functions in the pathway purine metabolism; AMP biosynthesis via salvage pathway; AMP from adenine: step 1/1. Its function is as follows. Catalyzes a salvage reaction resulting in the formation of AMP, that is energically less costly than de novo synthesis. In Nitrosococcus oceani (strain ATCC 19707 / BCRC 17464 / JCM 30415 / NCIMB 11848 / C-107), this protein is Adenine phosphoribosyltransferase.